The sequence spans 442 residues: Tubby-related protein 3 (442 aa).

Positions 23 to 68 are required for association with the IFT complex A (IFT-A); the sequence is MRQAKLDYQRLLLEKRQRKKRLEPFMVQPNPEARLRRAKPRASDEQ. The segment at 101 to 177 is disordered; the sequence is PSVSSSVVEE…TSGSATAAQP (77 aa). Positions 145-162 are enriched in polar residues; that stretch reads GISQSACLERPNSASSQN. Residues 163-175 show a composition bias toward low complexity; that stretch reads STDTGTSGSATAA.

This sequence belongs to the TUB family. Associates with the IFT complex A (IFT-A). Interacts with SIRT1. As to expression, expressed at high levels in testis, ovaries, thyroid, and spinal cord.

It localises to the nucleus. It is found in the cell membrane. The protein localises to the cell projection. Its subcellular location is the cilium. The protein resides in the cytoplasm. It localises to the secreted. Negative regulator of the Shh signaling transduction pathway: recruited to primary cilia via association with the IFT complex A (IFT-A) and is required for recruitment of G protein-coupled receptor GPR161 to cilia, a promoter of PKA-dependent basal repression machinery in Shh signaling. Binds to phosphorylated inositide (phosphoinositide) lipids. Both IFT-A- and phosphoinositide-binding properties are required to regulate ciliary G protein-coupled receptor trafficking. During adipogenesis, regulates ciliary trafficking of FFAR4 in preadipocytes. The protein is Tubby-related protein 3 of Homo sapiens (Human).